A 144-amino-acid chain; its full sequence is 3-dehydroquinate dehydratase (144 aa).

Tyr-22 serves as the catalytic Proton acceptor. Residues Asn-73, His-79, and Asp-86 each coordinate substrate. Catalysis depends on His-99, which acts as the Proton donor. Substrate-binding positions include 100-101 (LS) and Arg-110.

The protein belongs to the type-II 3-dehydroquinase family. Homododecamer.

The enzyme catalyses 3-dehydroquinate = 3-dehydroshikimate + H2O. It functions in the pathway metabolic intermediate biosynthesis; chorismate biosynthesis; chorismate from D-erythrose 4-phosphate and phosphoenolpyruvate: step 3/7. Its function is as follows. Catalyzes a trans-dehydration via an enolate intermediate. The polypeptide is 3-dehydroquinate dehydratase (Pelotomaculum thermopropionicum (strain DSM 13744 / JCM 10971 / SI)).